A 92-amino-acid polypeptide reads, in one-letter code: Small ribosomal subunit protein uS19 (92 aa).

This sequence belongs to the universal ribosomal protein uS19 family.

In terms of biological role, protein S19 forms a complex with S13 that binds strongly to the 16S ribosomal RNA. The protein is Small ribosomal subunit protein uS19 of Thermobifida fusca (strain YX).